A 57-amino-acid polypeptide reads, in one-letter code: MAVPKKRTSKTRTNRRRAQKKARAPQFVECPQCREKKLPHRICQSCGHYKGEEIIEV.

The interval 1 to 23 (MAVPKKRTSKTRTNRRRAQKKAR) is disordered.

Belongs to the bacterial ribosomal protein bL32 family.

This Natranaerobius thermophilus (strain ATCC BAA-1301 / DSM 18059 / JW/NM-WN-LF) protein is Large ribosomal subunit protein bL32.